Reading from the N-terminus, the 268-residue chain is 4-diphosphocytidyl-2-C-methyl-D-erythritol kinase (268 aa).

K10 is an active-site residue. An ATP-binding site is contributed by 101–111; sequence PTQAGLGGGST. D143 is an active-site residue.

This sequence belongs to the GHMP kinase family. IspE subfamily.

The catalysed reaction is 4-CDP-2-C-methyl-D-erythritol + ATP = 4-CDP-2-C-methyl-D-erythritol 2-phosphate + ADP + H(+). It participates in isoprenoid biosynthesis; isopentenyl diphosphate biosynthesis via DXP pathway; isopentenyl diphosphate from 1-deoxy-D-xylulose 5-phosphate: step 3/6. Catalyzes the phosphorylation of the position 2 hydroxy group of 4-diphosphocytidyl-2C-methyl-D-erythritol. The polypeptide is 4-diphosphocytidyl-2-C-methyl-D-erythritol kinase (Helicobacter pylori (strain ATCC 700392 / 26695) (Campylobacter pylori)).